The chain runs to 232 residues: tRNA1(Val) (adenine(37)-N6)-methyltransferase (232 aa).

Belongs to the methyltransferase superfamily. tRNA (adenine-N(6)-)-methyltransferase family.

It localises to the cytoplasm. The catalysed reaction is adenosine(37) in tRNA1(Val) + S-adenosyl-L-methionine = N(6)-methyladenosine(37) in tRNA1(Val) + S-adenosyl-L-homocysteine + H(+). In terms of biological role, specifically methylates the adenine in position 37 of tRNA(1)(Val) (anticodon cmo5UAC). This is tRNA1(Val) (adenine(37)-N6)-methyltransferase from Haemophilus influenzae (strain 86-028NP).